The sequence spans 579 residues: Folliculin (579 aa).

A disordered region spans residues 32 to 82 (GAGSGDSPGQVEQAEEEEGGIQMSSRVRAHSPAEGASTDSSSPGPKKSDMC). A phosphoserine mark is found at serine 62 and serine 73. One can recognise a uDENN FLCN/SMCR8-type domain in the interval 86–242 (RSLAVGHPGY…RNGNAARSLT (157 aa)). The stretch at 287–310 (EKLADLEEESESWDNSEAEEEEKA) forms a coiled coil. Over residues 294–308 (EESESWDNSEAEEEE) the composition is skewed to acidic residues. Positions 294–320 (EESESWDNSEAEEEEKAPATAEGAEGR) are disordered. Phosphoserine occurs at positions 302, 406, 537, 542, and 571. The region spanning 339–491 (QPPKLSVFKS…ILNKMEAALT (153 aa)) is the cDENN FLCN/SMCR8-type domain. One can recognise a dDENN FLCN/SMCR8-type domain in the interval 493–558 (QNLSVDVVDQ…LLKFWMTGLS (66 aa)).

The protein belongs to the folliculin family. Interacts (via C-terminus) with FNIP1 or FNIP2 (via C-terminus). Component of the lysosomal folliculin complex (LFC), composed of FLCN, FNIP1 (or FNIP2), RagA/RRAGA or RagB/RRAGB GDP-bound, RagC/RRAGC or RagD/RRAGD GTP-bound, and Ragulator. Interaction with FNIP1 or FNIP2 mediates indirect interaction with the PRKAA1, PRKAB1 and PRKAG1 subunits of 5'-AMP-activated protein kinase (AMPK). Interacts with HSP90AA1 in the presence of FNIP1. Interacts with HSP70, STUB1, CDC37, AHSA1, CCT2, STIP1, PTGES3 and PPP5C. Interacts with GABARAP; interaction takes place in the presence of FNIP1 and/or FNIP2. Interacts with RILP; the interaction is direct and promotes association between RILP and RAB34. Interacts with KIF3A and KIF3B. Interacts with lactate dehydrogenase LDHA, but not LDHB; the interaction is direct, may preferentially bind LDHA dimers rather than tetramers, and regulates LDHA activity, acting as an uncompetitive inhibitor. Phosphorylation by ULK1 modulates the interaction with GABARAP and is required to regulate autophagy. As to expression, expressed in kidney.

The protein localises to the lysosome membrane. Its subcellular location is the cytoplasm. It is found in the cytosol. It localises to the cell projection. The protein resides in the cilium. The protein localises to the cytoskeleton. Its subcellular location is the microtubule organizing center. It is found in the centrosome. It localises to the spindle. The protein resides in the nucleus. GTPase-activating activity is inhibited in the folliculin complex (LFC), which stabilizes the GDP-bound state of RagA/RRAGA (or RagB/RRAGB), because Arg-164 is located far from the RagC/RRAGC or RagD/RRAGD nucleotide pocket. Disassembly of the LFC complex upon amino acid restimulation liberates the GTPase-activating activity. In terms of biological role, multi-functional protein, involved in both the cellular response to amino acid availability and in the regulation of glycolysis. GTPase-activating protein that plays a key role in the cellular response to amino acid availability through regulation of the non-canonical mTORC1 signaling cascade controlling the MiT/TFE factors TFEB and TFE3. Activates mTORC1 by acting as a GTPase-activating protein: specifically stimulates GTP hydrolysis by RagC/RRAGC or RagD/RRAGD, promoting the conversion to the GDP-bound state of RagC/RRAGC or RagD/RRAGD, and thereby activating the kinase activity of mTORC1. The GTPase-activating activity is inhibited during starvation and activated in presence of nutrients. Acts as a key component for non-canonical mTORC1-dependent control of the MiT/TFE factors TFEB and TFE3, while it is not involved in mTORC1-dependent phosphorylation of canonical RPS6KB1/S6K1 and EIF4EBP1/4E-BP1. In low-amino acid conditions, the lysosomal folliculin complex (LFC) is formed on the membrane of lysosomes, which inhibits the GTPase-activating activity of FLCN, inactivates mTORC1 and maximizes nuclear translocation of TFEB and TFE3. Upon amino acid restimulation, RagA/RRAGA (or RagB/RRAGB) nucleotide exchange promotes disassembly of the LFC complex and liberates the GTPase-activating activity of FLCN, leading to activation of mTORC1 and subsequent cytoplasmic retention of TFEB and TFE3. Indirectly acts as a positive regulator of Wnt signaling by promoting mTOR-dependent cytoplasmic retention of MiT/TFE factor TFE3. Required for the exit of hematopoietic stem cell from pluripotency by promoting mTOR-dependent cytoplasmic retention of TFE3, thereby increasing Wnt signaling. Involved in the control of embryonic stem cells differentiation; together with LAMTOR1 it is necessary to recruit and activate RagC/RRAGC and RagD/RRAGD at the lysosomes, and to induce exit of embryonic stem cells from pluripotency via non-canonical, mTOR-independent TFE3 inactivation. Acts as an inhibitor of browning of adipose tissue by regulating mTOR-dependent cytoplasmic retention of TFE3. In response to flow stress, regulates STK11/LKB1 accumulation and mTORC1 activation through primary cilia: may act by recruiting STK11/LKB1 to primary cilia for activation of AMPK resided at basal bodies, causing mTORC1 down-regulation. Together with FNIP1 and/or FNIP2, regulates autophagy: following phosphorylation by ULK1, interacts with GABARAP and promotes autophagy. Required for starvation-induced perinuclear clustering of lysosomes by promoting association of RILP with its effector RAB34. Regulates glycolysis by binding to lactate dehydrogenase LDHA, acting as an uncompetitive inhibitor. The polypeptide is Folliculin (Rattus norvegicus (Rat)).